We begin with the raw amino-acid sequence, 291 residues long: Phosphatidylglycerol--prolipoprotein diacylglyceryl transferase (291 aa).

The next 4 membrane-spanning stretches (helical) occupy residues 24–44 (WYAL…RALL), 64–84 (FILW…VLFY), 99–119 (IWKG…AVIL), and 125–145 (GLPI…GLFL). Arg-147 lines the a 1,2-diacyl-sn-glycero-3-phospho-(1'-sn-glycerol) pocket. 3 helical membrane passes run 187-207 (ATLE…AGAL), 211-231 (GLVL…GEFF), and 247-267 (MGML…CVAW).

The protein belongs to the Lgt family.

The protein localises to the cell inner membrane. The enzyme catalyses L-cysteinyl-[prolipoprotein] + a 1,2-diacyl-sn-glycero-3-phospho-(1'-sn-glycerol) = an S-1,2-diacyl-sn-glyceryl-L-cysteinyl-[prolipoprotein] + sn-glycerol 1-phosphate + H(+). It functions in the pathway protein modification; lipoprotein biosynthesis (diacylglyceryl transfer). Its function is as follows. Catalyzes the transfer of the diacylglyceryl group from phosphatidylglycerol to the sulfhydryl group of the N-terminal cysteine of a prolipoprotein, the first step in the formation of mature lipoproteins. The sequence is that of Phosphatidylglycerol--prolipoprotein diacylglyceryl transferase from Nitrobacter hamburgensis (strain DSM 10229 / NCIMB 13809 / X14).